Here is a 346-residue protein sequence, read N- to C-terminus: KKNSILKKNQSWINATQNNFKVDDYESLIPNADLVINLTPDKQHHNVIKTLQKLMKKNSCLGYSHGFNIVEFGETIRKDITVIMVAPKCPGTEVREEYKRGFGVPTLIAVHDKNDIHQQGLDIAKAWSFSIGAHHAGVLESSFVAEVKSDLMGEQTILCGMLQTASLLCYDKLIQNKCDPAYASKLIQHGWETITESLKHGGITLMMDRLSNSXKIRAYKISEKIKKILSPLFQKHMDDIISGEFSSEMMKDWSNNDKKLLDCRRKIKNTSFEQSPIYKEKIPEQEYYDHGILMIAILKSGIELSFEKMITAGIIEESAYYESLHELPLIANTISRKKLYEMNKVI.

The 141-residue stretch at 1–141 (KKNSILKKNQ…GAHHAGVLES (141 aa)) folds into the KARI N-terminal Rossmann domain. Residues serine 11 and 41–43 (DKQ) contribute to the NADP(+) site. Histidine 65 is a catalytic residue. Residue glycine 91 participates in NADP(+) binding. 2 KARI C-terminal knotted domains span residues 142–286 (SFVA…PEQE) and 287–346 (YYDH…NKVI). Mg(2+) contacts are provided by aspartate 150, glutamate 154, glutamate 322, and glutamate 326.

Belongs to the ketol-acid reductoisomerase family. Mg(2+) serves as cofactor.

It carries out the reaction (2R)-2,3-dihydroxy-3-methylbutanoate + NADP(+) = (2S)-2-acetolactate + NADPH + H(+). The enzyme catalyses (2R,3R)-2,3-dihydroxy-3-methylpentanoate + NADP(+) = (S)-2-ethyl-2-hydroxy-3-oxobutanoate + NADPH + H(+). The protein operates within amino-acid biosynthesis; L-isoleucine biosynthesis; L-isoleucine from 2-oxobutanoate: step 2/4. It participates in amino-acid biosynthesis; L-valine biosynthesis; L-valine from pyruvate: step 2/4. Functionally, involved in the biosynthesis of branched-chain amino acids (BCAA). Catalyzes an alkyl-migration followed by a ketol-acid reduction of (S)-2-acetolactate (S2AL) to yield (R)-2,3-dihydroxy-isovalerate. In the isomerase reaction, S2AL is rearranged via a Mg-dependent methyl migration to produce 3-hydroxy-3-methyl-2-ketobutyrate (HMKB). In the reductase reaction, this 2-ketoacid undergoes a metal-dependent reduction by NADPH to yield (R)-2,3-dihydroxy-isovalerate. The polypeptide is Ketol-acid reductoisomerase (NADP(+)) (ilvC) (Buchnera aphidicola subsp. Uroleucon rurale).